A 196-amino-acid chain; its full sequence is UPF0301 protein BF2109 (196 aa).

The protein belongs to the UPF0301 (AlgH) family.

This Bacteroides fragilis (strain ATCC 25285 / DSM 2151 / CCUG 4856 / JCM 11019 / LMG 10263 / NCTC 9343 / Onslow / VPI 2553 / EN-2) protein is UPF0301 protein BF2109.